The following is a 581-amino-acid chain: Probable CDP-diacylglycerol--glycerol-3-phosphate 3-phosphatidyltransferase (581 aa).

Residues 27–65 are disordered; it reads RSATTTTTTTTKACGNGSSQSPPSTPLLSSKSSTITSNK. Residues 44–65 show a composition bias toward low complexity; the sequence is SSQSPPSTPLLSSKSSTITSNK. An ATP-binding site is contributed by 160 to 167; that stretch reads ASLYLGTS. PLD phosphodiesterase domains are found at residues 248–274 and 487–520; these read TIGVQHIKTYIFDDDLLLSGANLSKDY and DKWTYHAKGLWIQVKNQQHPSITLIGSPNFGSRS. Residues His253, Lys255, and Asp260 contribute to the active site.

The protein belongs to the CDP-alcohol phosphatidyltransferase class-II family.

The catalysed reaction is a CDP-1,2-diacyl-sn-glycerol + sn-glycerol 3-phosphate = a 1,2-diacyl-sn-glycero-3-phospho-(1'-sn-glycero-3'-phosphate) + CMP + H(+). It participates in phospholipid metabolism; phosphatidylglycerol biosynthesis; phosphatidylglycerol from CDP-diacylglycerol: step 1/2. Its function is as follows. Functions in the biosynthesis of the anionic phospholipids phosphatidylglycerol and cardiolipin. The chain is Probable CDP-diacylglycerol--glycerol-3-phosphate 3-phosphatidyltransferase (pgs1) from Dictyostelium discoideum (Social amoeba).